Reading from the N-terminus, the 526-residue chain is Probable di/tripeptide-binding protein 5 (526 aa).

The signal sequence occupies residues Met1 to Ala21.

It belongs to the bacterial solute-binding protein 5 family. The complex is composed of two ATP-binding proteins (DppD and DppF), two transmembrane proteins (DppB and DppC) and a solute-binding protein (DppA5). Five orthologous SBPs (DppA1-A5) are present in P.aeruginosa, which increases the substrate specificity of the DppBCDF transporter.

Its function is as follows. Part of the ABC transporter DppABCDF involved in the uptake of various di/tripeptides. The chain is Probable di/tripeptide-binding protein 5 from Pseudomonas aeruginosa (strain UCBPP-PA14).